We begin with the raw amino-acid sequence, 364 residues long: Triacylglycerol lipase (364 aa).

Positions 1 to 44 are cleaved as a signal peptide; the sequence is MARTMRSRVVAGAVACAMSIAPFAGTTAVMTLATTHAAMAATAP. The AB hydrolase-1 domain occupies 54-266; the sequence is PIILVHGLSG…AIQPTLSVFG (213 aa). A substrate-binding site is contributed by Leu61. Ser131 functions as the Nucleophile in the catalytic mechanism. Gln132 contributes to the substrate binding site. A disulfide bridge links Cys234 with Cys314. Residue Asp286 participates in Ca(2+) binding. Catalysis depends on charge relay system residues Asp308 and His330. Residues Asp332, Gln336, and Val340 each coordinate Ca(2+).

This sequence belongs to the AB hydrolase superfamily. Pseudomonas lipase family. Monomer. Ca(2+) is required as a cofactor.

It is found in the secreted. The enzyme catalyses a triacylglycerol + H2O = a diacylglycerol + a fatty acid + H(+). With respect to regulation, inhibited by RC-(Rp,Sp)- and SC-(Rp,Sp)-1,2-dioctylcarbamoylglycero-3-O-p-nitrophenyl octylphosphonate. Also inhibited by diethyl-p-nitrophenylphosphate (E600). Catalyzes the hydrolysis of triacylglycerol. It shows a preference for triacylglycerols with a chain length between 6 and 12 carbons. This is Triacylglycerol lipase from Burkholderia cepacia (Pseudomonas cepacia).